Reading from the N-terminus, the 141-residue chain is uncharacterized protein (141 aa).

Residues 13 to 35 form a helical membrane-spanning segment; that stretch reads PVIGVILMVAITVILAAVIASFV.

It is found in the membrane. This is an uncharacterized protein from Archaeoglobus fulgidus (strain ATCC 49558 / DSM 4304 / JCM 9628 / NBRC 100126 / VC-16).